We begin with the raw amino-acid sequence, 328 residues long: dTDP-glucose 4,6-dehydratase (328 aa).

NAD(+) is bound by residues 13-14 (FI), 37-40 (DALT), 63-64 (DI), 82-86 (LAAES), and Thr101. Position 86 (Ser86) interacts with substrate. Thr126 serves as a coordination point for substrate. The active-site Proton donor is Asp127. Active-site proton acceptor residues include Glu128 and Tyr150. 150–154 (YSASK) serves as a coordination point for NAD(+). Asn179 contributes to the substrate binding site. NAD(+) is bound at residue Asn180. Substrate-binding positions include 189–190 (KL), 205–207 (PLY), Arg214, Asn249, and 272–276 (DRKGH).

Belongs to the NAD(P)-dependent epimerase/dehydratase family. dTDP-glucose dehydratase subfamily. As to quaternary structure, homodimer. NAD(+) serves as cofactor.

The enzyme catalyses dTDP-alpha-D-glucose = dTDP-4-dehydro-6-deoxy-alpha-D-glucose + H2O. It participates in antibiotic biosynthesis; streptomycin biosynthesis. In terms of biological role, involved in the biosynthesis of the streptose moiety of streptomycin. Catalyzes the dehydration of dTDP-D-glucose to form dTDP-6-deoxy-D-xylo-4-hexulose via a three-step process involving oxidation, dehydration and reduction. This chain is dTDP-glucose 4,6-dehydratase, found in Streptomyces griseus.